The sequence spans 234 residues: MCQTCRVGKRRDAREQIEAKIVELGRRQLLDHGAAGLSLRAIARNLGMVSSAVYRYVSSRDELLTLLLVDAYSDLADTVDRARDDTVADSWSDDVIAIARAVRGWAVTNPARWALLYGSPVPGYHAPPDRTAGVATRVVGAFFDAIAAGIATGDIRLTDDVAPQPMSSDFEKIRQEFGFPGDDRVVTKCFLLWAGVVGAISLEVFGQYGADMLTDPGVVFDAQTRLLVAVLAEH.

The 61-residue stretch at 15–75 (EQIEAKIVEL…LLLVDAYSDL (61 aa)) folds into the HTH tetR-type domain. Residues 38–57 (SLRAIARNLGMVSSAVYRYV) constitute a DNA-binding region (H-T-H motif).

In terms of assembly, homodimer.

The protein localises to the cytoplasm. Functionally, may participate in the regulatory network that controls the expression of MmpL lipid transporters. The sequence is that of HTH-type transcriptional regulator MT1864 from Mycobacterium tuberculosis (strain CDC 1551 / Oshkosh).